The following is a 242-amino-acid chain: Protein HTATIP2 (242 aa).

Ala-2 is subject to N-acetylalanine. The tract at residues 2-25 (AETEALSKLREDFRMQNKSVFILG) is required for interaction with elongation factor EEF1A1. Ser-27, Gly-28, Glu-29, Thr-30, Arg-52, Arg-53, Leu-92, Gly-93, Tyr-143, Lys-147, Leu-170, and Arg-178 together coordinate NADPH. Tyr-143 (proton acceptor) is an active-site residue. Residue Lys-147 is part of the active site.

In terms of assembly, monomer. Forms homodimers during oxidative stress. Interacts (via N-terminus) with elongation factor EEF1A1 (via middle-region); the interaction is direct and competes with EEF1A1 binding to guanyl-nucleotide exchange factor EEF1B2, thereby inhibiting GDP for GTP exchange and reactivation of EEF1A1. Interacts with nuclear transport receptors XPO4, IPO5/RANBP5, IPO7, IPO9 and KPNB1 as well as GCN1L1/GCN1 and LRPPRC probably through their HEAT repeats. Binds NCOA5/CIA. As to quaternary structure, interacts (via N-terminus) with proteasome subunit PSMD4/s5a. (Microbial infection) Interacts with HIV-1 Tat (via activation domain). In terms of tissue distribution, high levels in liver, lung, skeletal muscle, pancreas and placenta. Moderate levels in heart and kidney. Low levels in brain. Not expressed or low levels in variant small cell lung carcinomas, 33% of hepatocellular carcinomas and neuroblastomas. Levels are reduced in the heart of patients with hypertrophic cardiomyopathy and failing hearts.

It localises to the cytoplasm. Functionally, represses translation by preventing reactivation of elongation factor eEF1A. May also inhibit nuclear import by competing with nuclear import substrates for binding to a subset of nuclear transport receptors. Has additionally been proposed to act as a redox sensor involved in cellular oxidative stress surveillance. The chain is Protein HTATIP2 from Homo sapiens (Human).